A 530-amino-acid chain; its full sequence is Light-harvesting complex I LH38 proteins (530 aa).

The protein localises to the plastid. The protein resides in the chloroplast. In Euglena gracilis, this protein is Light-harvesting complex I LH38 proteins.